Reading from the N-terminus, the 351-residue chain is Rod outer segment membrane protein 1 (351 aa).

The Cytoplasmic segment spans residues 1–19 (MAPVLPLVLPLQPRIRLAQ). Residues 20–43 (GLWLLSWLLVLVGGLTLLCSGHLL) traverse the membrane as a helical segment. The Lumenal portion of the chain corresponds to 44–64 (VQLWHLGTFLAPSCPFSALPQ). The chain crosses the membrane as a helical span at residues 65–84 (VALAASAVALGTGLVGSGAS). At 85–102 (RASLDAEQYPPWRGVLGP) the chain is on the cytoplasmic side. A helical membrane pass occupies residues 103-125 (LLVAGTAGGGGLLVLALGLALAL). Over 126–264 (PGTLDTGLEE…EVLLGHLQGL (139 aa)) the chain is Lumenal. Residues 265–286 (ASTLGNMLAVTFLLQTLVLLGL) traverse the membrane as a helical segment. Over 287–351 (RYLQTALEGL…KPPKECLPEA (65 aa)) the chain is Cytoplasmic. Positions 325 to 351 (QGAGPHRPAPGETPPEEKPPKECLPEA) are disordered. The span at 339-351 (PEEKPPKECLPEA) shows a compositional bias: basic and acidic residues.

It belongs to the PRPH2/ROM1 family. As to quaternary structure, homodimer; disulfide-linked. Forms a homotetramer. Forms a heterotetramer with PRPH2. Homotetramer and heterotetramer core complexes go on to form higher order complexes by formation of intermolecular disulfide bonds. Interacts with STX3. Interacts with SNAP25. As to expression, retina photoreceptor (at protein level). In rim region of ROS disks (at protein level).

The protein resides in the photoreceptor inner segment membrane. It localises to the photoreceptor outer segment membrane. In terms of biological role, plays a role in rod outer segment (ROS) morphogenesis. May play a role with PRPH2 in the maintenance of the structure of ROS curved disks. Plays a role in the organization of the ROS and maintenance of ROS disk diameter. Involved in the maintenance of the retina outer nuclear layer. The chain is Rod outer segment membrane protein 1 (ROM1) from Bos taurus (Bovine).